The sequence spans 485 residues: Probable serine/threonine-protein kinase nek1 (485 aa).

The 272-residue stretch at 12-283 (YLIKSQIGSG…TQQILEQVFI (272 aa)) folds into the Protein kinase domain. ATP contacts are provided by residues 18 to 26 (IGSGSYGNT) and K41. D136 acts as the Proton acceptor in catalysis. Positions 354–365 (KNQQQQSPQKLE) are enriched in polar residues. A disordered region spans residues 354-419 (KNQQQQSPQK…NNDKNNNINN (66 aa)). Over residues 366–419 (NNNNNNNDNNNNNNNNNNNNNNNNNNNNNNNNNNNNNNNNNNNNNNDKNNNINN) the composition is skewed to low complexity.

This sequence belongs to the protein kinase superfamily. NEK Ser/Thr protein kinase family. NIMA subfamily.

It catalyses the reaction L-seryl-[protein] + ATP = O-phospho-L-seryl-[protein] + ADP + H(+). The catalysed reaction is L-threonyl-[protein] + ATP = O-phospho-L-threonyl-[protein] + ADP + H(+). The protein is Probable serine/threonine-protein kinase nek1 (nek1) of Dictyostelium discoideum (Social amoeba).